Reading from the N-terminus, the 31-residue chain is Cytochrome b6-f complex subunit 6 (31 aa).

A helical membrane pass occupies residues I5–L25.

It belongs to the PetL family. The 4 large subunits of the cytochrome b6-f complex are cytochrome b6, subunit IV (17 kDa polypeptide, PetD), cytochrome f and the Rieske protein, while the 4 small subunits are PetG, PetL, PetM and PetN. The complex functions as a dimer.

It localises to the plastid. Its subcellular location is the chloroplast thylakoid membrane. Functionally, component of the cytochrome b6-f complex, which mediates electron transfer between photosystem II (PSII) and photosystem I (PSI), cyclic electron flow around PSI, and state transitions. PetL is important for photoautotrophic growth as well as for electron transfer efficiency and stability of the cytochrome b6-f complex. The polypeptide is Cytochrome b6-f complex subunit 6 (Chlorokybus atmophyticus (Soil alga)).